The chain runs to 475 residues: Splicing factor U2AF 65 kDa subunit (475 aa).

A disordered region spans residues 1-90; the sequence is MSDFDEFERQ…RHEKKKKVRK (90 aa). Position 2 is an N-acetylserine (Ser-2). The residue at position 2 (Ser-2) is a Phosphoserine. The required for interaction with PRPF19 stretch occupies residues 2-93; sequence SDFDEFERQL…KKKKVRKYWD (92 aa). A compositionally biased stretch (basic and acidic residues) spans 7-22; it reads FERQLNENKQERDKEN. Lys-15 is modified (5-hydroxylysine; by JMJD6; alternate). Lys-15 is covalently cross-linked (Glycyl lysine isopeptide (Lys-Gly) (interchain with G-Cter in SUMO2); alternate). The necessary and sufficient to stimulate pre-mRNAs 3'-end cleavage in a CFIm complex-dependent manner stretch occupies residues 17-47; sequence ERDKENRHRKRSHSRSRSRDRKRRSRSRDRR. Residues 23–46 show a composition bias toward basic residues; it reads RHRKRSHSRSRSRDRKRRSRSRDR. A compositionally biased stretch (basic and acidic residues) spans 47–56; sequence RNRDQRSASR. A Glycyl lysine isopeptide (Lys-Gly) (interchain with G-Cter in SUMO2); alternate cross-link involves residue Lys-70. An N6-acetyllysine; alternate modification is found at Lys-70. Ser-79 is modified (phosphoserine). Basic residues predominate over residues 79-89; it reads SPRHEKKKKVR. RRM domains lie at 149–231, 259–337, and 385–466; these read RRLY…RPHD, HKLF…RASV, and LPEE…YCDP. Lys-276 carries the 5-hydroxylysine; by JMJD6 modification. A Phosphoserine modification is found at Ser-294.

This sequence belongs to the splicing factor SR family. Interacts with U2AF1L4. Heterodimer with U2AF1. Binds unphosphorylated SF1. Interacts with SCAF11 and SNW1. Interacts with ZRSR2/U2AF1-RS2. Interacts with RBM17. Interacts with PRPF19; the interaction is direct. Interacts with POLR2A (via the C-terminal domain); recruits PRPF19 and the Prp19 complex to the pre-mRNA. Interacts with KHDC4 (Isoform 2). Interacts with ZRSR2. Interacts with the SF3B complex composed of SF3B1, SF3B2, SF3B3, SF3B4, SF3B5, SF3B6 and PHF5A. Interacts (via N-terminus) with CPSF7 (via C-terminus); this interaction stimulates pre-mRNA 3'-end processing by promoting the recruitment of the CFIm complex to cleavage and polyadenylation signals. Interacts with ARGLU1; interaction may be involved in ARGLU1-mediated modulation of alternative splicing. Lysyl-hydroxylation at Lys-15 and Lys-276 affects the mRNA splicing activity of the protein, leading to regulate some, but not all, alternative splicing events.

Its subcellular location is the nucleus. Plays a role in pre-mRNA splicing and 3'-end processing. By recruiting PRPF19 and the PRP19C/Prp19 complex/NTC/Nineteen complex to the RNA polymerase II C-terminal domain (CTD), and thereby pre-mRNA, may couple transcription to splicing. Induces cardiac troponin-T (TNNT2) pre-mRNA exon inclusion in muscle. Regulates the TNNT2 exon 5 inclusion through competition with MBNL1. Binds preferentially to a single-stranded structure within the polypyrimidine tract of TNNT2 intron 4 during spliceosome assembly. Required for the export of mRNA out of the nucleus, even if the mRNA is encoded by an intron-less gene. Represses the splicing of MAPT/Tau exon 10. Positively regulates pre-mRNA 3'-end processing by recruiting the CFIm complex to cleavage and polyadenylation signals. This is Splicing factor U2AF 65 kDa subunit (U2AF2) from Homo sapiens (Human).